Here is a 1418-residue protein sequence, read N- to C-terminus: JmjC domain-containing histone demethylation protein 1 (1418 aa).

Disordered regions lie at residues methionine 1–threonine 86, alanine 102–aspartate 162, and glycine 308–asparagine 329. The span at tryptophan 44–valine 60 shows a compositional bias: basic and acidic residues. The span at threonine 61–asparagine 71 shows a compositional bias: polar residues. A compositionally biased stretch (basic and acidic residues) spans serine 127–lysine 139. Polar residues predominate over residues proline 143–aspartate 162. Over residues glycine 308–aspartate 321 the composition is skewed to basic and acidic residues. The PHD-type zinc-finger motif lies at glutamine 331–isoleucine 391. One can recognise a JmjC domain in the interval valine 588–lysine 746. Threonine 639 is a substrate binding site. Positions 642 and 644 each coordinate Fe cation. Position 659 (lysine 659) interacts with substrate. Histidine 714 is a Fe cation binding site. 4 disordered regions span residues proline 891–isoleucine 964, asparagine 1090–cysteine 1118, tyrosine 1130–arginine 1195, and lysine 1250–aspartate 1394. Residues leucine 907–glutamate 925 are compositionally biased toward basic and acidic residues. Basic and acidic residues-rich tracts occupy residues tyrosine 1130–lysine 1143 and alanine 1186–arginine 1195. Residues lysine 1250–alanine 1263 show a composition bias toward polar residues. Residues serine 1341 to serine 1352 show a composition bias toward low complexity.

The protein belongs to the JHDM1 histone demethylase family. Fe(2+) is required as a cofactor.

It is found in the nucleus. The enzyme catalyses N(6),N(6)-dimethyl-L-lysyl(36)-[histone H3] + 2 2-oxoglutarate + 2 O2 = L-lysyl(36)-[histone H3] + 2 formaldehyde + 2 succinate + 2 CO2. Functionally, histone demethylase that specifically demethylates 'Lys-36' of histone H3, thereby playing a central role in histone code. The polypeptide is JmjC domain-containing histone demethylation protein 1 (jhd1) (Aspergillus fumigatus (strain ATCC MYA-4609 / CBS 101355 / FGSC A1100 / Af293) (Neosartorya fumigata)).